The primary structure comprises 840 residues: Axin-2 (840 aa).

The segment at Met1–Leu75 is disordered. A Tankyrase-binding motif motif is present at residues Ala21–Glu30. Residues Lys42–Ala55 are compositionally biased toward polar residues. Positions Arg56 to Ala69 are enriched in basic and acidic residues. The region spanning Ser81–Val200 is the RGS domain. 5 disordered regions span residues Ser300–Thr363, Ile398–Pro435, Leu447–Thr485, Arg572–Ser614, and Ala715–Lys745. The segment covering Ser303–Ser318 has biased composition (low complexity). The interaction with GSK3B stretch occupies residues Met327 to Ser413. The segment at Ser413–Gln478 is interaction with beta-catenin. The span at Asp468–Gln478 shows a compositional bias: basic residues. Positions Ala758–Asp840 constitute a DIX domain.

Interacts with glycogen synthase kinase-3 beta (GSK3B) and beta-catenin. The interaction between axin and beta-catenin occurs via the armadillo repeats contained in beta-catenin. Interacts with SMAD7 and RNF111. Interacts with ANKRD6. Interacts with SIAH1. Interacts with SIAH2. In terms of processing, ADP-ribosylated by tankyrase TNKS and TNKS2. Poly-ADP-ribosylated protein is recognized by RNF146, followed by ubiquitination and subsequent activation of the Wnt signaling pathway. Ubiquitinated by RNF146 when poly-ADP-ribosylated, leading to its degradation and subsequent activation of the Wnt signaling pathway. Deubiquitinated by USP34, deubiquitinated downstream of beta-catenin stabilization step: deubiquitination is important Wnt signaling to positively regulate beta-catenin (CTNBB1)-mediated transcription. Post-translationally, probably phosphorylated by GSK3B and dephosphorylated by PP2A. As to expression, expressed in Tcf7-positive innate-like T-cells (at protein level).

It localises to the cytoplasm. Inhibitor of the Wnt signaling pathway. Down-regulates beta-catenin. Probably facilitate the phosphorylation of beta-catenin and APC by GSK3B. The chain is Axin-2 from Mus musculus (Mouse).